The following is a 511-amino-acid chain: Coatomer subunit delta (511 aa).

Basic and acidic residues predominate over residues 168–177 (QARRDAERQG). The disordered stretch occupies residues 168-188 (QARRDAERQGKKAPGFGGFGS). Position 223 is a phosphoserine (serine 223). An N6-acetyllysine mark is found at lysine 233 and lysine 241. Serine 244 carries the post-translational modification Phosphoserine. Residues 271–511 (MESVHMKIEE…TFLVDKYEIL (241 aa)) enclose the MHD domain. N6-acetyllysine occurs at positions 309 and 351. Phosphoserine is present on serine 493.

The protein belongs to the adaptor complexes medium subunit family. Delta-COP subfamily. Oligomeric complex that consists of at least the alpha, beta, beta', gamma, delta, epsilon and zeta subunits.

The protein localises to the cytoplasm. The protein resides in the golgi apparatus membrane. Its subcellular location is the cytoplasmic vesicle. It is found in the COPI-coated vesicle membrane. Its function is as follows. The coatomer is a cytosolic protein complex that binds to dilysine motifs and reversibly associates with Golgi non-clathrin-coated vesicles, which further mediate biosynthetic protein transport from the ER, via the Golgi up to the trans Golgi network. Coatomer complex is required for budding from Golgi membranes, and is essential for the retrograde Golgi-to-ER transport of dilysine-tagged proteins. In mammals, the coatomer can only be recruited by membranes associated to ADP-ribosylation factors (ARFs), which are small GTP-binding proteins; the complex also influences the Golgi structural integrity, as well as the processing, activity, and endocytic recycling of LDL receptors. This chain is Coatomer subunit delta (Arcn1), found in Rattus norvegicus (Rat).